Reading from the N-terminus, the 52-residue chain is Rubredoxin (52 aa).

The Rubredoxin-like domain occupies 1–52 (MEKWQCTVCGYIYDPEVGDPTQNIPPGTKFEDLPDDWVCPDCGVGKDQFEKI). Fe cation is bound by residues C6, C9, C39, and C42.

Belongs to the rubredoxin family. The cofactor is Fe(3+).

Rubredoxin is a small nonheme, iron protein lacking acid-labile sulfide. Its single Fe, chelated to 4 Cys, functions as an electron acceptor and may also stabilize the conformation of the molecule. In Thermoanaerobacterium thermosaccharolyticum (strain ATCC 7956 / DSM 571 / NCIMB 9385 / NCA 3814 / NCTC 13789 / WDCM 00135 / 2032) (Clostridium thermosaccharolyticum), this protein is Rubredoxin.